Consider the following 541-residue polypeptide: T-complex protein 1 subunit epsilon (541 aa).

The residue at position 2 (Ala-2) is an N-acetylalanine. Lys-20 is covalently cross-linked (Glycyl lysine isopeptide (Lys-Gly) (interchain with G-Cter in SUMO2)). Ser-26 is modified (phosphoserine). Residue Gly-53 participates in ADP binding. Gly-53 contacts ATP. Asp-104 serves as a coordination point for Mg(2+). Gly-105, Thr-106, Thr-107, and Ser-175 together coordinate ADP. Thr-106 and Thr-107 together coordinate ATP. Residues Lys-210, Lys-214, Lys-265, Lys-275, and Lys-279 each participate in a glycyl lysine isopeptide (Lys-Gly) (interchain with G-Cter in SUMO2) cross-link. At Ser-346 the chain carries Phosphoserine. A Glycyl lysine isopeptide (Lys-Gly) (interchain with G-Cter in SUMO2) cross-link involves residue Lys-392. ADP-binding residues include Gly-422, Asp-492, Glu-508, and Lys-513. Gly-422 contributes to the ATP binding site. Phosphoserine is present on Ser-539.

This sequence belongs to the TCP-1 chaperonin family. As to quaternary structure, component of the chaperonin-containing T-complex (TRiC), a hexadecamer composed of two identical back-to-back stacked rings enclosing a protein folding chamber. Each ring is made up of eight different subunits: TCP1/CCT1, CCT2, CCT3, CCT4, CCT5, CCT6A/CCT6, CCT7, CCT8. Interacts with PACRG. Interacts with DNAAF4. Interacts with DLEC1. Interacts with SPMAP2. Ubiquitinated by the DCX(DCAF12) complex specifically recognizes the diglutamate (Glu-Glu) at the C-terminus, leading to its degradation.

The protein localises to the cytoplasm. It is found in the cytoskeleton. The protein resides in the microtubule organizing center. Its subcellular location is the centrosome. The enzyme catalyses ATP + H2O = ADP + phosphate + H(+). Component of the chaperonin-containing T-complex (TRiC), a molecular chaperone complex that assists the folding of actin, tubulin and other proteins upon ATP hydrolysis. The TRiC complex mediates the folding of WRAP53/TCAB1, thereby regulating telomere maintenance. As part of the TRiC complex may play a role in the assembly of BBSome, a complex involved in ciliogenesis regulating transports vesicles to the cilia. The polypeptide is T-complex protein 1 subunit epsilon (Cct5) (Rattus norvegicus (Rat)).